The sequence spans 283 residues: Bifunctional protein FolD (283 aa).

NADP(+) contacts are provided by residues 166–168 and Ile232; that span reads GAS.

It belongs to the tetrahydrofolate dehydrogenase/cyclohydrolase family. As to quaternary structure, homodimer.

The enzyme catalyses (6R)-5,10-methylene-5,6,7,8-tetrahydrofolate + NADP(+) = (6R)-5,10-methenyltetrahydrofolate + NADPH. The catalysed reaction is (6R)-5,10-methenyltetrahydrofolate + H2O = (6R)-10-formyltetrahydrofolate + H(+). It participates in one-carbon metabolism; tetrahydrofolate interconversion. In terms of biological role, catalyzes the oxidation of 5,10-methylenetetrahydrofolate to 5,10-methenyltetrahydrofolate and then the hydrolysis of 5,10-methenyltetrahydrofolate to 10-formyltetrahydrofolate. The protein is Bifunctional protein FolD of Hamiltonella defensa subsp. Acyrthosiphon pisum (strain 5AT).